A 480-amino-acid chain; its full sequence is Protein nucleotidyltransferase YdiU (480 aa).

The ATP site is built by Gly-86, Gly-88, Arg-89, Lys-109, Asp-121, Gly-122, Arg-172, and Arg-179. Asp-248 serves as the catalytic Proton acceptor. Residues Asn-249 and Asp-258 each contribute to the Mg(2+) site. Asp-258 is an ATP binding site.

This sequence belongs to the SELO family. Requires Mg(2+) as cofactor. Mn(2+) is required as a cofactor.

It catalyses the reaction L-seryl-[protein] + ATP = 3-O-(5'-adenylyl)-L-seryl-[protein] + diphosphate. The enzyme catalyses L-threonyl-[protein] + ATP = 3-O-(5'-adenylyl)-L-threonyl-[protein] + diphosphate. The catalysed reaction is L-tyrosyl-[protein] + ATP = O-(5'-adenylyl)-L-tyrosyl-[protein] + diphosphate. It carries out the reaction L-histidyl-[protein] + UTP = N(tele)-(5'-uridylyl)-L-histidyl-[protein] + diphosphate. It catalyses the reaction L-seryl-[protein] + UTP = O-(5'-uridylyl)-L-seryl-[protein] + diphosphate. The enzyme catalyses L-tyrosyl-[protein] + UTP = O-(5'-uridylyl)-L-tyrosyl-[protein] + diphosphate. Functionally, nucleotidyltransferase involved in the post-translational modification of proteins. It can catalyze the addition of adenosine monophosphate (AMP) or uridine monophosphate (UMP) to a protein, resulting in modifications known as AMPylation and UMPylation. The protein is Protein nucleotidyltransferase YdiU of Salmonella paratyphi B (strain ATCC BAA-1250 / SPB7).